Consider the following 122-residue polypeptide: APPPVGDQAGGRKVDCFKYNTKGSAFACTRHERPVCGTDHRTYSNECMFCMLTQNKGFGVRILQDNECDIECTQYSDMCTMEYLPLCGSDGKNYSNKCLFCNAVMGSRGALFLAKHGQCQSP.

Kazal-like domains are found at residues 10-70 (GGRK…ECDI) and 71-121 (ECTQ…QCQS). Intrachain disulfides connect Cys-16–Cys-50, Cys-28–Cys-47, Cys-36–Cys-68, Cys-72–Cys-101, Cys-79–Cys-98, and Cys-87–Cys-119.

It localises to the secreted. Its function is as follows. This inhibitor is composed of two homologous actively inhibiting halves: one which inhibits trypsin, the other which inhibits elastase. The polypeptide is Double-headed protease inhibitor, submandibular gland (Panthera uncia (Snow leopard)).